The sequence spans 281 residues: UDP-N-acetylenolpyruvoylglucosamine reductase (281 aa).

One can recognise an FAD-binding PCMH-type domain in the interval 17–180 (VGGKAKKLII…LSATFKFDNG (164 aa)). The active site involves Arg-159. The active-site Proton donor is Ser-206. The active site involves Glu-276.

It belongs to the MurB family. FAD serves as cofactor.

It localises to the cytoplasm. It catalyses the reaction UDP-N-acetyl-alpha-D-muramate + NADP(+) = UDP-N-acetyl-3-O-(1-carboxyvinyl)-alpha-D-glucosamine + NADPH + H(+). Its pathway is cell wall biogenesis; peptidoglycan biosynthesis. Cell wall formation. This is UDP-N-acetylenolpyruvoylglucosamine reductase from Fusobacterium nucleatum subsp. nucleatum (strain ATCC 25586 / DSM 15643 / BCRC 10681 / CIP 101130 / JCM 8532 / KCTC 2640 / LMG 13131 / VPI 4355).